Here is a 254-residue protein sequence, read N- to C-terminus: Putative cysteine-rich repeat secretory protein 37 (254 aa).

Residues 1–29 (MYSSYSLSKRLVSIPILAIQLLLIRSVSS) form the signal peptide. Gnk2-homologous domains are found at residues 36 to 138 (YLNH…SIRS) and 145 to 251 (YRNV…LYPF).

Belongs to the cysteine-rich repeat secretory protein family.

The protein localises to the secreted. This Arabidopsis thaliana (Mouse-ear cress) protein is Putative cysteine-rich repeat secretory protein 37 (CRRSP37).